Here is a 549-residue protein sequence, read N- to C-terminus: Probable protein kinase UbiB (549 aa).

The Protein kinase domain maps to 123-501 (DFDDTPLASA…QQKAHKSNYL (379 aa)). ATP is bound by residues 129–137 (LASASISQV) and lysine 152. The active-site Proton acceptor is aspartate 287. 2 consecutive transmembrane segments (helical) span residues 498-518 (SNYLLITSAILVICGTILLNQ) and 520-540 (ATLWPSYGSIGIGITLWVLGW).

This sequence belongs to the ABC1 family. UbiB subfamily.

The protein resides in the cell inner membrane. Its pathway is cofactor biosynthesis; ubiquinone biosynthesis [regulation]. Functionally, is probably a protein kinase regulator of UbiI activity which is involved in aerobic coenzyme Q (ubiquinone) biosynthesis. The protein is Probable protein kinase UbiB of Shewanella pealeana (strain ATCC 700345 / ANG-SQ1).